We begin with the raw amino-acid sequence, 250 residues long: Cobalt transport protein CbiM (250 aa).

The N-terminal stretch at 1–25 is a signal peptide; the sequence is MKQNIKLGVIAALMLIVLTPVTSNA. 6 helical membrane-spanning segments follow: residues 33–53, 68–88, 100–120, 132–152, 163–183, and 205–225; these read LPVK…LVGL, VLLA…IPSV, LGAI…VLIF, TLGA…FLIF, AMPV…VTSI, and GIFF…TVIV.

This sequence belongs to the CbiM family. In terms of assembly, forms an energy-coupling factor (ECF) transporter complex composed of an ATP-binding protein (A component, CbiO), a transmembrane protein (T component, CbiQ) and 2 possible substrate-capture proteins (S components, CbiM and CbiN) of unknown stoichimetry.

It localises to the cell membrane. It functions in the pathway cofactor biosynthesis; adenosylcobalamin biosynthesis. Its function is as follows. Part of the energy-coupling factor (ECF) transporter complex CbiMNOQ involved in cobalt import. This chain is Cobalt transport protein CbiM, found in Clostridioides difficile (strain R20291) (Peptoclostridium difficile).